The primary structure comprises 769 residues: Serine protease HtrA-like (769 aa).

The span at Met1–Glu20 shows a compositional bias: basic residues. The segment at Met1–Ala390 is disordered. Basic and acidic residues-rich tracts occupy residues Phe21–Lys64 and Leu71–Lys108. Residues Tyr126 to Lys137 show a composition bias toward polar residues. The segment covering Ser138 to Ser186 has biased composition (basic and acidic residues). Polar residues-rich tracts occupy residues Gly202–Pro221 and Gln247–Ser262. Basic and acidic residues predominate over residues Gln264–Val295. A compositionally biased stretch (polar residues) spans Asn298 to Leu308. Residues Lys310 to Asn330 are compositionally biased toward basic and acidic residues. The segment covering Ala331–His347 has biased composition (polar residues). The segment covering Arg348–Lys362 has biased composition (basic and acidic residues). Positions Gln366–Ala390 are enriched in polar residues. A helical transmembrane segment spans residues Leu410–Val430. Catalysis depends on charge relay system residues His504, Asp534, and Ser619. The PDZ domain maps to Ile680–Asp733.

Belongs to the peptidase S1C family.

The protein resides in the cell membrane. The protein is Serine protease HtrA-like of Staphylococcus aureus (strain bovine RF122 / ET3-1).